Consider the following 254-residue polypeptide: Phosphoribosylaminoimidazole-succinocarboxamide synthase (254 aa).

The protein belongs to the SAICAR synthetase family.

The enzyme catalyses 5-amino-1-(5-phospho-D-ribosyl)imidazole-4-carboxylate + L-aspartate + ATP = (2S)-2-[5-amino-1-(5-phospho-beta-D-ribosyl)imidazole-4-carboxamido]succinate + ADP + phosphate + 2 H(+). Its pathway is purine metabolism; IMP biosynthesis via de novo pathway; 5-amino-1-(5-phospho-D-ribosyl)imidazole-4-carboxamide from 5-amino-1-(5-phospho-D-ribosyl)imidazole-4-carboxylate: step 1/2. In Brucella melitensis biotype 2 (strain ATCC 23457), this protein is Phosphoribosylaminoimidazole-succinocarboxamide synthase.